Consider the following 121-residue polypeptide: Protein PilH (121 aa).

The Response regulatory domain occupies 3 to 119; sequence RILIVDDSPT…TLLKTINAVL (117 aa). A 4-aspartylphosphate modification is found at Asp-52.

May be a part of a signal-transduction system that regulates twitching motility by controlling pilus function (extension and retraction). This is Protein PilH (pilH) from Pseudomonas aeruginosa (strain ATCC 15692 / DSM 22644 / CIP 104116 / JCM 14847 / LMG 12228 / 1C / PRS 101 / PAO1).